We begin with the raw amino-acid sequence, 231 residues long: MSSPVLKCQSVHKVYVQGKESIEVLRGVNIALYPEQTVAIVGASGSGKSTLLNIMGALDHPSSGSISISGQDVSDMDEKAKARLRNAHVGFVYQFHHLLPEFSALENVCMPLLLRGVAVKEAKKEAEYWLGRVGLSHRLKHRPGQLSGGERQRVAIARALSPRPSCVLMDEPTGNLDPETAESVQALLWDLVRQNQTSFVLVTHDYRLAARMDEQYSLEEGVLAKVAPNSL.

The 226-residue stretch at 6-231 (LKCQSVHKVY…VLAKVAPNSL (226 aa)) folds into the ABC transporter domain. Residue 42 to 49 (GASGSGKS) coordinates ATP.

The protein belongs to the ABC transporter superfamily. Lipoprotein translocase (TC 3.A.1.125) family. The complex is composed of two ATP-binding proteins (LolD) and two transmembrane proteins (LolC and LolE).

Its subcellular location is the cell inner membrane. Part of the ABC transporter complex LolCDE involved in the translocation of mature outer membrane-directed lipoproteins, from the inner membrane to the periplasmic chaperone, LolA. Responsible for the formation of the LolA-lipoprotein complex in an ATP-dependent manner. The chain is Lipoprotein-releasing system ATP-binding protein LolD from Hahella chejuensis (strain KCTC 2396).